Reading from the N-terminus, the 808-residue chain is Type VI secretion system spike protein VgrG4b (808 aa).

The protein belongs to the VgrG protein family.

The protein resides in the secreted. In terms of biological role, part of the H2 type VI secretion system (H2-T6SS) specialized secretion system, which delivers several virulence factors in both prokaryotic and eukaryotic cells during infection. Allows the delivery of the phospholipase effector PldA to target cells where it exerts its toxicity. In Pseudomonas aeruginosa (strain ATCC 15692 / DSM 22644 / CIP 104116 / JCM 14847 / LMG 12228 / 1C / PRS 101 / PAO1), this protein is Type VI secretion system spike protein VgrG4b.